The chain runs to 467 residues: MEPGTNSFQVEFPDFSSTILQKLNQQRQQGQLCDVSIVVQGHIFQAHKAVLAASSPYFCDQVLLKNSRRIVLPDVMNPRVFENILLFSYTGRLVMPAPEIVSYLTAASFLQMWHVVDKCTEVLEGNPTVLCQKLNHGSDHQSPSSSNYNGLVESFELGSGGHTDFPKAQELRDGENEEESTKDELSSQVTEHEYLPSNSSTEHDRLSTEMASQDGEEGTNDSTEFHYTRPLYSKPSIMAHRRWIHVKPERLEQAWDGMDVHAAYDEHQVTESVNTMQTDHSAQPSGAEEEFQIVEKKVEVEFDEQAEGSSYDEQVDFYGSSMEEFSGEKLGGNLIGHKQEAALAAGYSENIEMAMGIKEEASHLGFSATDKLYPCQCGKSFTHKSQRDRHMSMHLGLRPYGCSVCGKKFKMKHHLVGHMKIHTGIKPYECNICAKRFMWRDSFHRHVTSCTKSYEAAKAEQNTTEAN.

N-acetylmethionine is present on M1. In terms of domain architecture, BTB spans 33–97 (CDVSIVVQGH…SYTGRLVMPA (65 aa)). Disordered regions lie at residues 134–153 (LNHG…GLVE) and 162–227 (HTDF…EFHY). Over residues 140 to 149 (HQSPSSSNYN) the composition is skewed to polar residues. 2 stretches are compositionally biased toward basic and acidic residues: residues 164-174 (DFPKAQELRDG) and 182-194 (KDEL…EHEY). Glycyl lysine isopeptide (Lys-Gly) (interchain with G-Cter in SUMO2) cross-links involve residues K182, K247, K297, and K358. The segment at 373–394 (YPCQCGKSFTHKSQRDRHMSMH) adopts a C2H2-type 1; atypical zinc-finger fold. The C2H2-type 2 zinc finger occupies 400-422 (YGCSVCGKKFKMKHHLVGHMKIH). Phosphothreonine is present on T423. The C2H2-type 3; atypical zinc finger occupies 428 to 450 (YECNICAKRFMWRDSFHRHVTSC). K458 participates in a covalent cross-link: Glycyl lysine isopeptide (Lys-Gly) (interchain with G-Cter in SUMO2).

The protein belongs to the krueppel C2H2-type zinc-finger protein family. As to quaternary structure, interacts with BDP1.

It is found in the nucleus. May be involved in transcriptional regulation. The polypeptide is Zinc finger and BTB domain-containing protein 43 (Zbtb43) (Mus musculus (Mouse)).